The chain runs to 606 residues: Retrovirus-related Pol polyprotein from type-1 retrotransposable element R2 (606 aa).

The Reverse transcriptase domain occupies G1–F208. The segment at I331–P606 is nucleic acid-binding endonuclease.

The catalysed reaction is DNA(n) + a 2'-deoxyribonucleoside 5'-triphosphate = DNA(n+1) + diphosphate. The protein is Retrovirus-related Pol polyprotein from type-1 retrotransposable element R2 of Popillia japonica (Japanese beetle).